The chain runs to 1114 residues: Lysylphosphatidylglycerol biosynthesis bifunctional protein LysX (1114 aa).

Positions 1-11 (MSASTETHHAS) are enriched in basic and acidic residues. The segment at 1–26 (MSASTETHHASEAAVPTAPRPRPGLG) is disordered. The segment at 1-618 (MSASTETHHA…GLHSDGSAPG (618 aa)) is phosphatidylglycerol lysyltransferase. The next 6 membrane-spanning stretches (helical) occupy residues 38-58 (IAGLILGVFSVLVFLWSISPV), 77-97 (APDTSLSWALVVALLAAALAS), 101-121 (IAWWLLTIYLVLFLITNVIVS), 126-146 (NVNAMAAAVVQVVLIGILIAA), 164-184 (GVLIVGLAIGTLLGWGLVELF), and 219-239 (FVNTLLGLFGAIALLAAVITL). The segment at 619–1114 (EGLAPTATGP…LAFPLAKPRQ (496 aa)) is lysine--tRNA ligase. Residues 674 to 751 (VRIAGRLLRI…LSLLANEWRM (78 aa)) constitute a DNA-binding region (OB). 2 residues coordinate Mg(2+): Asp1025 and Glu1032.

In the N-terminal section; belongs to the LPG synthetase family. It in the C-terminal section; belongs to the class-II aminoacyl-tRNA synthetase family. Mg(2+) is required as a cofactor.

The protein resides in the cell membrane. It catalyses the reaction tRNA(Lys) + L-lysine + ATP = L-lysyl-tRNA(Lys) + AMP + diphosphate. It carries out the reaction L-lysyl-tRNA(Lys) + a 1,2-diacyl-sn-glycero-3-phospho-(1'-sn-glycerol) = a 1,2-diacyl-sn-glycero-3-phospho-1'-(3'-O-L-lysyl)-sn-glycerol + tRNA(Lys). In terms of biological role, catalyzes the production of L-lysyl-tRNA(Lys)transfer and the transfer of a lysyl group from L-lysyl-tRNA(Lys) to membrane-bound phosphatidylglycerol (PG), which produces lysylphosphatidylglycerol (LPG), one of the components of the bacterial membrane with a positive net charge. LPG synthesis contributes to the resistance to cationic antimicrobial peptides (CAMPs) and likely protects M.tuberculosis against the CAMPs produced by competiting microorganisms (bacteriocins). In fact, the modification of anionic phosphatidylglycerol with positively charged L-lysine results in repulsion of the peptides. This chain is Lysylphosphatidylglycerol biosynthesis bifunctional protein LysX (lysX), found in Rhodococcus jostii (strain RHA1).